We begin with the raw amino-acid sequence, 477 residues long: uncharacterized protein (477 aa).

Helical transmembrane passes span 31–51, 60–80, 103–123, 130–150, 177–197, 205–225, 248–268, 291–311, 334–354, 359–379, 384–404, and 433–453; these read LLRLSLFQVSVGMAQVLLLGT, LGVPALVVAAMISIPVLVAPF, LWFGSLWQMGGLALMPFSLIL, MGPAWAGEAFAGVAFLMAGVG, LLYVMFLIGMGISAVIVGWLL, LIRVVQGCGAMTLVLNVIALW, AWGLLAAETGALRLLATVMVG, VGQTTWLTAGWAFGALVGFIW, IVAFTAVLFSPLFGSKVLFFA, IGLGSGMFGIATLTVAMMVVV, GIALGAWGAAQATAAGLAVFI, and VVYVTEIGLLFITLAVLGPLV.

Belongs to the PucC family.

The protein localises to the cell membrane. This is an uncharacterized protein from Rhodobacter capsulatus (Rhodopseudomonas capsulata).